The primary structure comprises 230 residues: Ribose-5-phosphate isomerase A (230 aa).

Substrate-binding positions include 32-35, 85-88, and 98-101; these read TGST, DGAD, and KGGG. Glu-107 (proton acceptor) is an active-site residue. Residue Lys-125 participates in substrate binding.

The protein belongs to the ribose 5-phosphate isomerase family. In terms of assembly, homodimer.

The enzyme catalyses aldehydo-D-ribose 5-phosphate = D-ribulose 5-phosphate. It functions in the pathway carbohydrate degradation; pentose phosphate pathway; D-ribose 5-phosphate from D-ribulose 5-phosphate (non-oxidative stage): step 1/1. Functionally, catalyzes the reversible conversion of ribose-5-phosphate to ribulose 5-phosphate. The protein is Ribose-5-phosphate isomerase A of Burkholderia ambifaria (strain MC40-6).